Here is a 440-residue protein sequence, read N- to C-terminus: Enolase (440 aa).

2 residues coordinate substrate: His-159 and Glu-168. Glu-211 serves as the catalytic Proton donor. Mg(2+) contacts are provided by Asp-245, Glu-296, and Asp-321. 2 residues coordinate substrate: Glu-296 and Asp-321. Lys-346 functions as the Proton acceptor in the catalytic mechanism. Residues 373 to 376 and Lys-397 each bind substrate; that span reads SHRS.

It belongs to the enolase family. Homodimer. The cofactor is Mg(2+).

It is found in the cytoplasm. The enzyme catalyses (2R)-2-phosphoglycerate = phosphoenolpyruvate + H2O. It functions in the pathway carbohydrate degradation; glycolysis; pyruvate from D-glyceraldehyde 3-phosphate: step 4/5. The chain is Enolase (eno-1) from Tuber borchii (White truffle).